Here is a 357-residue protein sequence, read N- to C-terminus: uncharacterized protein (357 aa).

Residues 27-242 (HFGNTVTFER…VSSVRLNFPK (216 aa)) form the Radical SAM core domain. Positions 44, 50, and 53 each coordinate [4Fe-4S] cluster.

[4Fe-4S] cluster is required as a cofactor.

This is an uncharacterized protein from Methanocaldococcus jannaschii (strain ATCC 43067 / DSM 2661 / JAL-1 / JCM 10045 / NBRC 100440) (Methanococcus jannaschii).